Reading from the N-terminus, the 504-residue chain is Heat shock 70 kDa protein 14 (504 aa).

It belongs to the heat shock protein 70 family. In terms of assembly, component of ribosome-associated complex (RAC).

Its subcellular location is the cytoplasm. It localises to the cytosol. In terms of biological role, component of the ribosome-associated complex (RAC), a complex involved in folding or maintaining nascent polypeptides in a folding-competent state. In Danio rerio (Zebrafish), this protein is Heat shock 70 kDa protein 14 (hspa14).